A 213-amino-acid polypeptide reads, in one-letter code: Ribosomal RNA small subunit methyltransferase G (213 aa).

S-adenosyl-L-methionine is bound by residues glycine 72, phenylalanine 77, 125–126 (IE), and arginine 141.

This sequence belongs to the methyltransferase superfamily. RNA methyltransferase RsmG family.

Its subcellular location is the cytoplasm. The enzyme catalyses guanosine(527) in 16S rRNA + S-adenosyl-L-methionine = N(7)-methylguanosine(527) in 16S rRNA + S-adenosyl-L-homocysteine. Functionally, specifically methylates the N7 position of guanine in position 527 of 16S rRNA. This chain is Ribosomal RNA small subunit methyltransferase G, found in Sinorhizobium medicae (strain WSM419) (Ensifer medicae).